Here is a 151-residue protein sequence, read N- to C-terminus: Globin CTT-X (151 aa).

In terms of domain architecture, Globin spans Thr-6–Glu-150. His-64 and His-99 together coordinate heme b.

This sequence belongs to the globin family. Homodimer.

In Chironomus thummi thummi (Midge), this protein is Globin CTT-X (CTT-10).